A 204-amino-acid chain; its full sequence is Thymidine kinase (204 aa).

Residues 18–25 (GSMFSGKT) and 91–94 (DEGQ) each bind ATP. Glu-92 functions as the Proton acceptor in the catalytic mechanism. 4 residues coordinate Zn(2+): Cys-148, Cys-151, Cys-180, and His-183.

Belongs to the thymidine kinase family. Homotetramer.

Its subcellular location is the cytoplasm. The catalysed reaction is thymidine + ATP = dTMP + ADP + H(+). In Bdellovibrio bacteriovorus (strain ATCC 15356 / DSM 50701 / NCIMB 9529 / HD100), this protein is Thymidine kinase.